A 903-amino-acid chain; its full sequence is Dual serine/threonine and tyrosine protein kinase (903 aa).

The stretch at 382-414 (ANRKQEEMKEMIVETLESMKEQLLEDAANLEFT) forms a coiled coil. Positions 627 to 881 (PKLGRELGRG…PLLGIVQPSL (255 aa)) constitute a Protein kinase domain. ATP contacts are provided by residues 633-641 (LGRGQYGVV) and lysine 656. Aspartate 752 (proton acceptor) is an active-site residue.

Belongs to the protein kinase superfamily. Ser/Thr protein kinase family.

The protein resides in the cytoplasm. The protein localises to the cell membrane. It localises to the apical cell membrane. Its subcellular location is the basolateral cell membrane. It is found in the cell junction. It carries out the reaction L-seryl-[protein] + ATP = O-phospho-L-seryl-[protein] + ADP + H(+). The enzyme catalyses L-threonyl-[protein] + ATP = O-phospho-L-threonyl-[protein] + ADP + H(+). The catalysed reaction is L-tyrosyl-[protein] + ATP = O-phospho-L-tyrosyl-[protein] + ADP + H(+). May act as a positive regulator of ERK phosphorylation downstream of fibroblast growth factor-receptor activation. May induce both caspase-dependent apoptosis and caspase-independent cell death. May play a role in the embryonic development. The polypeptide is Dual serine/threonine and tyrosine protein kinase (Pimephales promelas (Fathead minnow)).